Here is a 180-residue protein sequence, read N- to C-terminus: DPPPVHDTDGNELRADANYYVLPANRAHGGGLTMAPGHGRRCPLFVSQEADGQRDGLPVRIAPHGGAPSDKIIRLSTDVRISFRAYTTCVQSTEWHIDSELVSGRRHVITGPVRDPSPSGRENAFRIEKYSGAEVHEYKLMACGDSCQDLGVFRDLKGGAWFLGATEPYHVVVFKKAPPA.

2 disulfide bridges follow: Cys42–Cys89 and Cys143–Cys147.

It belongs to the protease inhibitor I3 (leguminous Kunitz-type inhibitor) family.

In terms of biological role, inhibitor of endogenous alpha-amylase (wheat also produces an exogenous inhibitor which inactivates alpha-amylase from animal and insect origin). This inhibitor can also inhibit subtilisin. In Triticum aestivum (Wheat), this protein is Endogenous alpha-amylase/subtilisin inhibitor.